Here is a 529-residue protein sequence, read N- to C-terminus: Bifunctional purine biosynthesis protein PurH (529 aa).

The 148-residue stretch at 1 to 148 (MQQPRPIRRA…KNHKDVAIVV (148 aa)) folds into the MGS-like domain.

It belongs to the PurH family.

It carries out the reaction (6R)-10-formyltetrahydrofolate + 5-amino-1-(5-phospho-beta-D-ribosyl)imidazole-4-carboxamide = 5-formamido-1-(5-phospho-D-ribosyl)imidazole-4-carboxamide + (6S)-5,6,7,8-tetrahydrofolate. The catalysed reaction is IMP + H2O = 5-formamido-1-(5-phospho-D-ribosyl)imidazole-4-carboxamide. It functions in the pathway purine metabolism; IMP biosynthesis via de novo pathway; 5-formamido-1-(5-phospho-D-ribosyl)imidazole-4-carboxamide from 5-amino-1-(5-phospho-D-ribosyl)imidazole-4-carboxamide (10-formyl THF route): step 1/1. It participates in purine metabolism; IMP biosynthesis via de novo pathway; IMP from 5-formamido-1-(5-phospho-D-ribosyl)imidazole-4-carboxamide: step 1/1. This chain is Bifunctional purine biosynthesis protein PurH, found in Serratia proteamaculans (strain 568).